The following is a 360-amino-acid chain: Luc7-like protein (360 aa).

Residues 143 to 206 (KEQNSKITEL…QEKNENKRMS (64 aa)) are a coiled coil. Residues 255–360 (LGRTDFYNAP…DDRRKRDRNY (106 aa)) form a disordered region. Residues 269 to 293 (DSYRDDRRSSSSSYHDIDGRRDHRY) show a composition bias toward basic and acidic residues. The segment covering 312-321 (NNGRGSSRDN) has biased composition (low complexity). Basic and acidic residues predominate over residues 329 to 360 (RDYRNDHGKDYDRKRERDYYNDDDRRKRDRNY).

This sequence belongs to the Luc7 family.

It localises to the nucleus. Its function is as follows. May play a role in RNA splicing. The sequence is that of Luc7-like protein (crop) from Dictyostelium discoideum (Social amoeba).